The following is a 312-amino-acid chain: Protoheme IX farnesyltransferase (312 aa).

The next 8 helical transmembrane spans lie at 34–54 (LVIF…HPVL), 56–76 (FTAI…NMAL), 119–139 (ALVN…YVVI), 152–172 (IVIG…AATG), 179–199 (LLLF…LALF), 225–245 (ILLY…LGYF), 247–267 (WVYG…AINV), and 283–303 (LFAF…LDVL).

The protein belongs to the UbiA prenyltransferase family. Protoheme IX farnesyltransferase subfamily.

It localises to the cell inner membrane. It carries out the reaction heme b + (2E,6E)-farnesyl diphosphate + H2O = Fe(II)-heme o + diphosphate. Its pathway is porphyrin-containing compound metabolism; heme O biosynthesis; heme O from protoheme: step 1/1. Functionally, converts heme B (protoheme IX) to heme O by substitution of the vinyl group on carbon 2 of heme B porphyrin ring with a hydroxyethyl farnesyl side group. This Nitrobacter hamburgensis (strain DSM 10229 / NCIMB 13809 / X14) protein is Protoheme IX farnesyltransferase.